The sequence spans 83 residues: Acylphosphatase (83 aa).

The Acylphosphatase-like domain occupies 1–83 (MIEGRVQRVG…TGDDWFEVRY (83 aa)). Catalysis depends on residues arginine 12 and asparagine 30.

It belongs to the acylphosphatase family.

It catalyses the reaction an acyl phosphate + H2O = a carboxylate + phosphate + H(+). This chain is Acylphosphatase (acyP), found in Synechococcus sp. (strain CC9605).